A 382-amino-acid polypeptide reads, in one-letter code: Type 2 DNA topoisomerase 6 subunit A (382 aa).

A Topo IIA-type catalytic domain is found at 14–155; it reads YDPQKVLKKL…MHITADRRGY (142 aa). Tyr-108 functions as the O-(5'-phospho-DNA)-tyrosine intermediate in the catalytic mechanism. Residues Glu-202 and Asp-254 each coordinate Mg(2+).

This sequence belongs to the TOP6A family. As to quaternary structure, homodimer. Heterotetramer of two Top6A and two Top6B chains. Mg(2+) is required as a cofactor.

It catalyses the reaction ATP-dependent breakage, passage and rejoining of double-stranded DNA.. Its function is as follows. Relaxes both positive and negative superturns and exhibits a strong decatenase activity. The chain is Type 2 DNA topoisomerase 6 subunit A from Pyrococcus abyssi (strain GE5 / Orsay).